The chain runs to 131 residues: Holo-[acyl-carrier-protein] synthase (131 aa).

Residues aspartate 8 and glutamate 59 each coordinate Mg(2+).

This sequence belongs to the P-Pant transferase superfamily. AcpS family. It depends on Mg(2+) as a cofactor.

It localises to the cytoplasm. It carries out the reaction apo-[ACP] + CoA = holo-[ACP] + adenosine 3',5'-bisphosphate + H(+). Its function is as follows. Transfers the 4'-phosphopantetheine moiety from coenzyme A to a Ser of acyl-carrier-protein. This chain is Holo-[acyl-carrier-protein] synthase, found in Rickettsia rickettsii (strain Iowa).